The sequence spans 556 residues: Trigger factor (556 aa).

One can recognise a PPIase FKBP-type domain in the interval 169–255 (GDVVVIDFAA…LREIKAKELP (87 aa)). The segment covering 438 to 452 (VDSEGNPTQAPTSLA) has biased composition (polar residues). Residues 438–556 (VDSEGNPTQA…KPSKKDKKGK (119 aa)) form a disordered region. Positions 461–472 (PEAEFEADEPEA) are enriched in acidic residues. 2 stretches are compositionally biased toward low complexity: residues 486 to 503 (ETATGAETDGEAAAAEAE) and 511 to 526 (EASPAETVSASAAEAT).

It belongs to the FKBP-type PPIase family. Tig subfamily.

Its subcellular location is the cytoplasm. It carries out the reaction [protein]-peptidylproline (omega=180) = [protein]-peptidylproline (omega=0). In terms of biological role, involved in protein export. Acts as a chaperone by maintaining the newly synthesized protein in an open conformation. Functions as a peptidyl-prolyl cis-trans isomerase. The polypeptide is Trigger factor (Synechococcus sp. (strain JA-2-3B'a(2-13)) (Cyanobacteria bacterium Yellowstone B-Prime)).